We begin with the raw amino-acid sequence, 313 residues long: tRNA uridine(34) hydroxylase (313 aa).

The 95-residue stretch at 124 to 218 (SDPEVLLIDT…YLEEVPQEET (95 aa)) folds into the Rhodanese domain. The active-site Cysteine persulfide intermediate is cysteine 178.

This sequence belongs to the TrhO family.

It carries out the reaction uridine(34) in tRNA + AH2 + O2 = 5-hydroxyuridine(34) in tRNA + A + H2O. Its function is as follows. Catalyzes oxygen-dependent 5-hydroxyuridine (ho5U) modification at position 34 in tRNAs. The protein is tRNA uridine(34) hydroxylase of Pseudomonas fluorescens (strain Pf0-1).